Consider the following 94-residue polypeptide: Large ribosomal subunit protein uL23 (94 aa).

Belongs to the universal ribosomal protein uL23 family. In terms of assembly, part of the 50S ribosomal subunit. Contacts protein L29, and trigger factor when it is bound to the ribosome.

In terms of biological role, one of the early assembly proteins it binds 23S rRNA. One of the proteins that surrounds the polypeptide exit tunnel on the outside of the ribosome. Forms the main docking site for trigger factor binding to the ribosome. In Roseiflexus castenholzii (strain DSM 13941 / HLO8), this protein is Large ribosomal subunit protein uL23.